The sequence spans 66 residues: Large ribosomal subunit protein bL35 (66 aa).

Residues 1–14 (MPKMKTKSAAKKRF) are compositionally biased toward basic residues. Residues 1–34 (MPKMKTKSAAKKRFSMTATGKVKAGPAGKRHGMI) form a disordered region.

Belongs to the bacterial ribosomal protein bL35 family.

This Paracoccus denitrificans (strain Pd 1222) protein is Large ribosomal subunit protein bL35.